We begin with the raw amino-acid sequence, 770 residues long: Amyloid-beta precursor protein (770 aa).

The first 17 residues, 1–17 (MLPGLALLLLAAWTARA), serve as a signal peptide directing secretion. Residues 18–701 (LEVPTDGNAG…AEDVGSNKGA (684 aa)) lie on the Extracellular side of the membrane. A GFLD subdomain region spans residues 28–123 (LLAEPQIAMF…PYRCLVGEFV (96 aa)). In terms of domain architecture, E1 spans 28 to 189 (LLAEPQIAMF…RGVEFVCCPL (162 aa)). 6 disulfide bridges follow: Cys-38/Cys-62, Cys-73/Cys-117, Cys-98/Cys-105, Cys-133/Cys-187, Cys-144/Cys-174, and Cys-158/Cys-186. 96 to 110 (NWCKRGRKQCKTHPH) provides a ligand contact to heparin. The interval 131–189 (DKCKFLHQERMDVCETHLHWHTVAKETCSEKSTNLHDYGMLLPCGIDKFRGVEFVCCPL) is cuBD subdomain. Residues His-147, His-151, and Tyr-168 each contribute to the Cu(2+) site. The segment at 181–188 (GVEFVCCP) is zinc-binding. Zn(2+) is bound by residues Glu-183, Cys-186, and Cys-187. Acidic residues predominate over residues 194–207 (DNVDSADAEEDDSD). A disordered region spans residues 194-284 (DNVDSADAEE…TTTTTTESVE (91 aa)). Position 198 is a phosphoserine; by CK2 (Ser-198). At Ser-206 the chain carries Phosphoserine; by CK1. Sulfotyrosine is present on residues Tyr-217 and Tyr-262. A compositionally biased stretch (acidic residues) spans 228–264 (VAEEEEVAEVEEEEADDDEDDEDGDEVEEEAEEPYEE). Over residues 268-281 (RTTSIATTTTTTTE) the composition is skewed to low complexity. 3 cysteine pairs are disulfide-bonded: Cys-291–Cys-341, Cys-300–Cys-324, and Cys-316–Cys-337. One can recognise a BPTI/Kunitz inhibitor domain in the interval 291–341 (CSEQAETGPCRAMISRWYFDVTEGKCAPFFYGGCGGNRNNFDTEEYCMAVC). Sulfotyrosine is present on Tyr-336. The OX-2 signature appears at 344-365 (VMSQSLRKTTREPLTRDPVKLP). In terms of domain architecture, E2 spans 374-565 (AVDKYLETPG…EEIQDEVDEL (192 aa)). Positions 391 to 423 (FQKAKERLEAKHRERMSQVMREWEEAERQAKNL) are heparin-binding. Ser-441 is subject to Phosphoserine. Positions 491-522 (FNMLKKYVRAEQKDRQHTLKHFEHVRMVDPKK) are heparin-binding. Tyr-497 is subject to Phosphotyrosine. The collagen-binding stretch occupies residues 523 to 540 (AAQIRSQVMTHLRVIYER). 2 N-linked (GlcNAc...) asparagine glycosylation sites follow: Asn-542 and Asn-571. His-677, Tyr-681, His-684, and His-685 together coordinate Cu(2+). Positions 677, 681, 684, and 685 each coordinate Zn(2+). Residues 695–722 (VGSNKGAIIGLMVGGVVIATVIVITLVM) are interaction with PSEN1. A helical membrane pass occupies residues 702–722 (IIGLMVGGVVIATVIVITLVM). Over 723-770 (LKKKQYTSIHHGVVEVDAAVTPEERHLSKMQQNGYENPTYKFFEQMQN) the chain is Cytoplasmic. The short motif at 724–734 (KKKQYTSIHHG) is the Basolateral sorting signal element. The residue at position 729 (Thr-729) is a Phosphothreonine. Ser-730 carries the phosphoserine; by APP-kinase I modification. The segment at 732–751 (HHGVVEVDAAVTPEERHLSK) is interaction with G(o)-alpha. A Phosphothreonine; by CDK5 and MAPK10 modification is found at Thr-743. The segment at 756-770 (GYENPTYKFFEQMQN) is required for the interaction with KIF5B and for anterograde transport in axons. Tyr-757 carries the phosphotyrosine; by ABL1 modification. The YENPXY motif; contains endocytosis signal signature appears at 757–762 (YENPTY). Lys-763 is covalently cross-linked (Glycyl lysine isopeptide (Lys-Gly) (interchain with G-Cter in ubiquitin)).

It belongs to the APP family. In terms of assembly, binds, via its C-terminus, to the PID domain of several cytoplasmic proteins, including APBB family members, the APBA family, MAPK8IP1, SHC1 and NUMB and DAB1. Binding to DAB1 inhibits its serine phosphorylation. Interacts (via NPXY motif) with DAB2 (via PID domain); the interaction is impaired by tyrosine phosphorylation of the NPXY motif. Also interacts with GPCR-like protein BPP, APPBP1, IB1, KNS2 (via its TPR domains), APPBP2 (via BaSS) and DDB1. In vitro, it binds MAPT via the MT-binding domains. Associates with microtubules in the presence of ATP and in a kinesin-dependent manner. Interacts, through a C-terminal domain, with GNAO1. Amyloid-beta protein 42 binds CHRNA7 in hippocampal neurons. Amyloid-beta associates with HADH2. Interacts with CPEB1, ANKS1B and AGER. Interacts with ITM2B. Interacts with ITM2C. Interacts with IDE. Can form homodimers; dimerization is enhanced in the presence of Cu(2+) ions. Can form homodimers; this is promoted by heparin binding. Amyloid-beta protein 40 interacts with S100A9. CTF-alpha product of APP interacts with GSAP. Isoform APP695 interacts with SORL1 (via N-terminal ectodomain); this interaction retains APP in the trans-Golgi network and reduces processing into soluble APP-alpha and amyloid-beta peptides. Isoform APP770 interacts with SORL1. The C99 fragment also interacts with SORL1. Interacts with PLD3. Interacts with VDAC1. Interacts with NSG1; could regulate APP processing. Amyloid-beta protein 42 interacts with FPR2. Interacts (via transmembrane region) with PSEN1; the interaction is direct. Interacts with LRRK2. Interacts (via cytoplasmic domain) with KIF5B. Interacts (via C-terminus) with APBB2/FE65L1 (via C-terminus). Interacts (via intracellular domain) with APBB3. Post-translationally, proteolytically processed under normal cellular conditions. Cleavage either by alpha-secretase, beta-secretase or theta-secretase leads to generation and extracellular release of soluble APP peptides, S-APP-alpha and S-APP-beta, and the retention of corresponding membrane-anchored C-terminal fragments, C80, C83 and C99. Subsequent processing of C80 and C83 by gamma-secretase yields P3 peptides. This is the major secretory pathway and is non-amyloidogenic. Alternatively, presenilin/nicastrin-mediated gamma-secretase processing of C99 releases the amyloid-beta proteins, amyloid-beta protein 40 and amyloid-beta protein 42, major components of amyloid plaques, and the cytotoxic C-terminal fragments, gamma-CTF(50), gamma-CTF(57) and gamma-CTF(59). PSEN1 cleavage is more efficient with C83 than with C99 as substrate (in vitro). Amyloid-beta protein 40 and Amyloid-beta protein 42 are cleaved by ACE. Many other minor amyloid-beta peptides, amyloid-beta 1-X peptides, are found in cerebral spinal fluid (CSF) including the amyloid-beta X-15 peptides, produced from the cleavage by alpha-secretase. Proteolytically cleaved by caspases during neuronal apoptosis. Cleavage at Asp-739 by either caspase-3, -8 or -9 results in the production of the neurotoxic C31 peptide and the increased production of amyloid-beta peptides. In terms of processing, N- and O-glycosylated. Post-translationally, phosphorylation in the C-terminal on tyrosine, threonine and serine residues is neuron-specific. Phosphorylation can affect APP processing, neuronal differentiation and interaction with other proteins. Phosphorylated on Thr-743 in neuronal cells by Cdc5 kinase and Mapk10, in dividing cells by Cdc2 kinase in a cell-cycle dependent manner with maximal levels at the G2/M phase and, in vitro, by GSK-3-beta. The Thr-743 phosphorylated form causes a conformational change which reduces binding of Fe65 family members. In dopaminergic (DA) neurons, phosphorylation on Thr-743 by LRKK2 promotes the production and the nuclear translocation of the APP intracellular domain (AICD) which induces DA neuron apoptosis. Phosphorylation on Tyr-757 is required for SHC binding. Phosphorylated in the extracellular domain by casein kinases on both soluble and membrane-bound APP. This phosphorylation is inhibited by heparin. Trophic-factor deprivation triggers the cleavage of surface APP by beta-secretase to release sAPP-beta which is further cleaved to release an N-terminal fragment of APP (N-APP). In terms of processing, amyloid-beta peptides are degraded by IDE. Post-translationally, sulfated on tyrosine residues.

The protein localises to the cell membrane. The protein resides in the membrane. It is found in the perikaryon. Its subcellular location is the cell projection. It localises to the growth cone. The protein localises to the clathrin-coated pit. The protein resides in the early endosome. It is found in the cytoplasmic vesicle. Its subcellular location is the endoplasmic reticulum. It localises to the golgi apparatus. The protein localises to the secreted. The protein resides in the cell surface. It is found in the nucleus. Its subcellular location is the cytoplasm. In terms of biological role, functions as a cell surface receptor and performs physiological functions on the surface of neurons relevant to neurite growth, neuronal adhesion and axonogenesis. Interaction between APP molecules on neighboring cells promotes synaptogenesis. Involved in cell mobility and transcription regulation through protein-protein interactions. Can promote transcription activation through binding to APBB1-KAT5 and inhibit Notch signaling through interaction with Numb. Couples to apoptosis-inducing pathways such as those mediated by G(o) and JIP. Inhibits G(o)-alpha ATPase activity. Acts as a kinesin I membrane receptor, mediating the axonal transport of beta-secretase and presenilin 1. By acting as a kinesin I membrane receptor, plays a role in axonal anterograde transport of cargo towards synapses in axons. May be involved in copper homeostasis/oxidative stress through copper ion reduction. In vitro, copper-metallated APP induces neuronal death directly or is potentiated through Cu(2+)-mediated low-density lipoprotein oxidation. Can regulate neurite outgrowth through binding to components of the extracellular matrix such as heparin and collagen I and IV. Induces a AGER-dependent pathway that involves activation of p38 MAPK, resulting in internalization of amyloid-beta peptide and mitochondrial dysfunction in cultured cortical neurons. Provides Cu(2+) ions for GPC1 which are required for release of nitric oxide (NO) and subsequent degradation of the heparan sulfate chains on GPC1. Functionally, amyloid-beta peptides are lipophilic metal chelators with metal-reducing activity. Binds transient metals such as copper, zinc and iron. Its function is as follows. The gamma-CTF peptides as well as the caspase-cleaved peptides, including C31, are potent enhancers of neuronal apoptosis. This chain is Amyloid-beta precursor protein, found in Macaca fascicularis (Crab-eating macaque).